We begin with the raw amino-acid sequence, 577 residues long: Adenine deaminase (577 aa).

The protein belongs to the metallo-dependent hydrolases superfamily. Adenine deaminase family. Mn(2+) is required as a cofactor.

The enzyme catalyses adenine + H2O + H(+) = hypoxanthine + NH4(+). The chain is Adenine deaminase from Bacillus velezensis (strain DSM 23117 / BGSC 10A6 / LMG 26770 / FZB42) (Bacillus amyloliquefaciens subsp. plantarum).